The following is a 340-amino-acid chain: uncharacterized protein (340 aa).

A helical transmembrane segment spans residues 6-26 (ITFGLLVLMVCVILFVLYVQL).

The protein localises to the cell membrane. This is an uncharacterized protein from Bacillus subtilis (strain 168).